A 36-amino-acid chain; its full sequence is Zinc metalloproteinase-disintegrin-like VaH1 (36 aa).

A Peptidase M12B domain is found at 1–36; the sequence is MVTKYSSIFMSPILSNPPILYFSDCSREXYQKXLTN.

Belongs to the venom metalloproteinase (M12B) family. P-III subfamily. P-IIIa sub-subfamily. In terms of assembly, monomer. Zn(2+) is required as a cofactor. The N-terminus is blocked. In terms of processing, glycosylated. Expressed by the venom gland.

The protein localises to the secreted. With respect to regulation, inhibited by EDTA, but not inhibited by iodoacetamide, PMSF and pepstatin A. Functionally, snake venom zinc metalloprotease that exhibits strong hemorrhagic activity. It also degrades alpha-chain of fibrinogen (FGA), but not the beta- and the gamma-chains. Possesses potent azocaseinolytic activity and cleaves insulin B-chain, hydrolyzing it at positions Ala(14)-Leu(15), followed by Tyr(16)-Leu(17) and His(10)-Leu(11). In vivo, subcutaneous injection into mice induces strong hemorrhage. This Vipera ammodytes ammodytes (Western sand viper) protein is Zinc metalloproteinase-disintegrin-like VaH1.